The following is a 316-amino-acid chain: Olfactory receptor 2K2 (316 aa).

The Extracellular segment spans residues 1–20; the sequence is MQGENFTIWSIFFLEGFSQY. An N-linked (GlcNAc...) asparagine glycan is attached at Asn5. A helical membrane pass occupies residues 21–41; sequence PGLEVVLFVFSLVMYLTTLLG. Topologically, residues 42–65 are cytoplasmic; sequence NSTLILITILDSRLKTPMYLFLGN. A helical membrane pass occupies residues 66 to 86; the sequence is LSFMDICYTSASVPTLLVNLL. At 87–97 the chain is on the extracellular side; it reads SSQKTIIFSGC. Residues Cys97 and Cys188 are joined by a disulfide bond. The helical transmembrane segment at 98–118 threads the bilayer; that stretch reads AVQMYLSLAMGSTECVLLAVM. Residues 119 to 143 are Cytoplasmic-facing; it reads AYDRYVAICNPLRYSIIMNRCVCAR. The helical transmembrane segment at 144-164 threads the bilayer; that stretch reads MATVSWVTGCLTALLETSFAL. The Extracellular portion of the chain corresponds to 165 to 199; the sequence is QIPLCGNLIDHFTCEILAVLKLACTSSLLMNTIML. The helical transmembrane segment at 200-220 threads the bilayer; the sequence is VVSILLLPIPMLLVCISYIFI. The Cytoplasmic segment spans residues 221–238; sequence LSTILRITSAEGRNKAFS. The helical transmembrane segment at 239-259 threads the bilayer; that stretch reads TCGAHLTVVILYYGAALSMYL. Residues 260–270 lie on the Extracellular side of the membrane; the sequence is KPSSSNAQKID. A helical membrane pass occupies residues 271–291; that stretch reads KIISLLYGVLTPMLNPIIYSL. Topologically, residues 292 to 316 are cytoplasmic; that stretch reads RNKEVKDAMKKLLGKITLHQTHEHL.

This sequence belongs to the G-protein coupled receptor 1 family.

Its subcellular location is the cell membrane. Odorant receptor. The chain is Olfactory receptor 2K2 (OR2K2) from Homo sapiens (Human).